A 484-amino-acid chain; its full sequence is Ankyrin repeat protein T5 (484 aa).

ANK repeat units follow at residues 33–64 (MDDTPFSLYLTRYDCTLETLRLFLKRGVDVNG), 68–102 (TRTSPLCTVLSNKELGKEAETLAMCLIDAGADVNA), 106–138 (DGRYPLLCLLENDRINTTSFVKYMIDRGTLVCV), 142–173 (DGCGPIQTYLRSKNVVLETLHVLVRAGASIHD), 178–211 (YGFNILQCYMISHVRSSDVRILRFLAGQGVNSSQ), 251–280 (LDFTPINYCVIHNDRRTFDYLLEKGANPNV), and 284–313 (LGNSCLDLAVLNGNKYMTLRLLRKTITPDA).

The protein is Ankyrin repeat protein T5 of Rabbit fibroma virus (strain Kasza) (RFV).